The primary structure comprises 509 residues: Photosystem II CP47 reaction center protein (509 aa).

6 helical membrane-spanning segments follow: residues 21 to 36 (AVHL…WAGS), 101 to 115 (IILS…IWHW), 140 to 156 (GIHL…FGAF), 203 to 218 (IAAG…FHLT), 237 to 252 (VLSS…AFVT), and 457 to 472 (NFAL…HGGR).

The protein belongs to the PsbB/PsbC family. PsbB subfamily. In terms of assembly, PSII is composed of 1 copy each of membrane proteins PsbA, PsbB, PsbC, PsbD, PsbE, PsbF, PsbH, PsbI, PsbJ, PsbK, PsbL, PsbM, PsbT, PsbX, PsbY, PsbZ, Psb30/Ycf12, at least 3 peripheral proteins of the oxygen-evolving complex and a large number of cofactors. It forms dimeric complexes. Binds multiple chlorophylls. PSII binds additional chlorophylls, carotenoids and specific lipids. is required as a cofactor.

It localises to the plastid. Its subcellular location is the chloroplast thylakoid membrane. Functionally, one of the components of the core complex of photosystem II (PSII). It binds chlorophyll and helps catalyze the primary light-induced photochemical processes of PSII. PSII is a light-driven water:plastoquinone oxidoreductase, using light energy to abstract electrons from H(2)O, generating O(2) and a proton gradient subsequently used for ATP formation. This Trieres chinensis (Marine centric diatom) protein is Photosystem II CP47 reaction center protein.